Here is a 298-residue protein sequence, read N- to C-terminus: UDP-N-acetylenolpyruvoylglucosamine reductase (298 aa).

The FAD-binding PCMH-type domain occupies 27–191 (TGGNADVFVM…LDATFSLELE (165 aa)). Arg170 is a catalytic residue. The active-site Proton donor is the Ser220. Glu290 is an active-site residue.

This sequence belongs to the MurB family. It depends on FAD as a cofactor.

It is found in the cytoplasm. It carries out the reaction UDP-N-acetyl-alpha-D-muramate + NADP(+) = UDP-N-acetyl-3-O-(1-carboxyvinyl)-alpha-D-glucosamine + NADPH + H(+). It participates in cell wall biogenesis; peptidoglycan biosynthesis. Functionally, cell wall formation. The polypeptide is UDP-N-acetylenolpyruvoylglucosamine reductase (Listeria innocua serovar 6a (strain ATCC BAA-680 / CLIP 11262)).